The sequence spans 186 residues: Nicotinamide-nucleotide adenylyltransferase (186 aa).

This sequence belongs to the archaeal NMN adenylyltransferase family.

The protein resides in the cytoplasm. It carries out the reaction beta-nicotinamide D-ribonucleotide + ATP + H(+) = diphosphate + NAD(+). Its pathway is cofactor biosynthesis; NAD(+) biosynthesis; NAD(+) from nicotinamide D-ribonucleotide: step 1/1. The chain is Nicotinamide-nucleotide adenylyltransferase from Thermococcus sibiricus (strain DSM 12597 / MM 739).